Reading from the N-terminus, the 355-residue chain is MSGQGKRLMVMAGGTGGHVFPGLAVAHHLMAQGWQVRWLGTADRMEADLVPKHGIEIDFIRISGLRGKGIKALIAAPLRIFNAWRHARAIMKAYKPDVVLGMGGYVSGPGGLAAWSLGIPVVLHEQNGIAGLTNKWLAKIATKVMQAFPGAFPNAEVVGNPVRTDVLALPLPQQRLAGREGPVRVLVVGGSQGARILNQTMPQVAAKLGDSVTIWHQSGKGSQQSVEQAYAEAGQPQHKVTEFIDDMAAAYAWADVVVCRSGALTVSEIAAAGLPALFVPFQHKDRQQYWNALPLEKAGAAKIIEQPQLSVDAVANTLAGWSRETLLTMAERARAASIPDATERVANEVSRAARA.

UDP-N-acetyl-alpha-D-glucosamine is bound by residues 15-17 (TGG), Asn-127, Arg-163, Ser-191, Ile-244, 263-268 (ALTVSE), and Gln-288.

It belongs to the glycosyltransferase 28 family. MurG subfamily.

It localises to the cell inner membrane. The catalysed reaction is di-trans,octa-cis-undecaprenyl diphospho-N-acetyl-alpha-D-muramoyl-L-alanyl-D-glutamyl-meso-2,6-diaminopimeloyl-D-alanyl-D-alanine + UDP-N-acetyl-alpha-D-glucosamine = di-trans,octa-cis-undecaprenyl diphospho-[N-acetyl-alpha-D-glucosaminyl-(1-&gt;4)]-N-acetyl-alpha-D-muramoyl-L-alanyl-D-glutamyl-meso-2,6-diaminopimeloyl-D-alanyl-D-alanine + UDP + H(+). Its pathway is cell wall biogenesis; peptidoglycan biosynthesis. Cell wall formation. Catalyzes the transfer of a GlcNAc subunit on undecaprenyl-pyrophosphoryl-MurNAc-pentapeptide (lipid intermediate I) to form undecaprenyl-pyrophosphoryl-MurNAc-(pentapeptide)GlcNAc (lipid intermediate II). The sequence is that of UDP-N-acetylglucosamine--N-acetylmuramyl-(pentapeptide) pyrophosphoryl-undecaprenol N-acetylglucosamine transferase from Escherichia coli (strain 55989 / EAEC).